Reading from the N-terminus, the 278-residue chain is NH(3)-dependent NAD(+) synthetase (278 aa).

Residue 43-50 (GISGGVDS) participates in ATP binding. Aspartate 49 lines the Mg(2+) pocket. A deamido-NAD(+)-binding site is contributed by arginine 146. Residue threonine 166 coordinates ATP. Glutamate 171 serves as a coordination point for Mg(2+). Deamido-NAD(+) contacts are provided by lysine 179 and aspartate 186. Residues lysine 195 and threonine 217 each contribute to the ATP site. Residue 266–267 (HK) coordinates deamido-NAD(+).

This sequence belongs to the NAD synthetase family. Homodimer.

It catalyses the reaction deamido-NAD(+) + NH4(+) + ATP = AMP + diphosphate + NAD(+) + H(+). Its pathway is cofactor biosynthesis; NAD(+) biosynthesis; NAD(+) from deamido-NAD(+) (ammonia route): step 1/1. Catalyzes the ATP-dependent amidation of deamido-NAD to form NAD. Uses ammonia as a nitrogen source. The polypeptide is NH(3)-dependent NAD(+) synthetase (Pseudoalteromonas translucida (strain TAC 125)).